The chain runs to 110 residues: uncharacterized protein (110 aa).

2 disordered regions span residues 1-42 (MEWG…RAQQ) and 66-110 (RQLG…AAEP). Residues 36 to 68 (REERAQQLLDAVEQRQRQLLDTIAACEEMLRQL) are a coiled coil.

This is an uncharacterized protein from Homo sapiens (Human).